Consider the following 196-residue polypeptide: Dephospho-CoA kinase (196 aa).

The 191-residue stretch at 6 to 196 (AIALTGGIGT…QVERFLKTLL (191 aa)) folds into the DPCK domain. 14-19 (GTGKST) provides a ligand contact to ATP.

This sequence belongs to the CoaE family.

The protein localises to the cytoplasm. It catalyses the reaction 3'-dephospho-CoA + ATP = ADP + CoA + H(+). It functions in the pathway cofactor biosynthesis; coenzyme A biosynthesis; CoA from (R)-pantothenate: step 5/5. Catalyzes the phosphorylation of the 3'-hydroxyl group of dephosphocoenzyme A to form coenzyme A. The protein is Dephospho-CoA kinase of Helicobacter pylori (strain J99 / ATCC 700824) (Campylobacter pylori J99).